A 647-amino-acid polypeptide reads, in one-letter code: DNA ligase (647 aa).

NAD(+)-binding positions include D30 to D34, S79 to M80, and E105. K107 acts as the N6-AMP-lysine intermediate in catalysis. Positions 128, 162, and 301 each coordinate NAD(+). C395, C398, C411, and C416 together coordinate Zn(2+). The region spanning K570 to E647 is the BRCT domain.

This sequence belongs to the NAD-dependent DNA ligase family. LigA subfamily. Requires Mg(2+) as cofactor. Mn(2+) serves as cofactor.

It carries out the reaction NAD(+) + (deoxyribonucleotide)n-3'-hydroxyl + 5'-phospho-(deoxyribonucleotide)m = (deoxyribonucleotide)n+m + AMP + beta-nicotinamide D-nucleotide.. DNA ligase that catalyzes the formation of phosphodiester linkages between 5'-phosphoryl and 3'-hydroxyl groups in double-stranded DNA using NAD as a coenzyme and as the energy source for the reaction. It is essential for DNA replication and repair of damaged DNA. This Campylobacter jejuni subsp. doylei (strain ATCC BAA-1458 / RM4099 / 269.97) protein is DNA ligase.